The sequence spans 484 residues: Bifunctional protein HldE (484 aa).

The tract at residues 1 to 320 is ribokinase; the sequence is MDFSSITVLC…AELNAQDADA (320 aa). ATP is bound at residue 195–198; sequence NARE. Aspartate 265 is a catalytic residue. Positions 349-484 are cytidylyltransferase; that stretch reads FTNGCFDIIH…RIRAAGAADR (136 aa).

The protein in the N-terminal section; belongs to the carbohydrate kinase PfkB family. It in the C-terminal section; belongs to the cytidylyltransferase family. In terms of assembly, homodimer.

The catalysed reaction is D-glycero-beta-D-manno-heptose 7-phosphate + ATP = D-glycero-beta-D-manno-heptose 1,7-bisphosphate + ADP + H(+). The enzyme catalyses D-glycero-beta-D-manno-heptose 1-phosphate + ATP + H(+) = ADP-D-glycero-beta-D-manno-heptose + diphosphate. It functions in the pathway nucleotide-sugar biosynthesis; ADP-L-glycero-beta-D-manno-heptose biosynthesis; ADP-L-glycero-beta-D-manno-heptose from D-glycero-beta-D-manno-heptose 7-phosphate: step 1/4. The protein operates within nucleotide-sugar biosynthesis; ADP-L-glycero-beta-D-manno-heptose biosynthesis; ADP-L-glycero-beta-D-manno-heptose from D-glycero-beta-D-manno-heptose 7-phosphate: step 3/4. Catalyzes the phosphorylation of D-glycero-D-manno-heptose 7-phosphate at the C-1 position to selectively form D-glycero-beta-D-manno-heptose-1,7-bisphosphate. Functionally, catalyzes the ADP transfer from ATP to D-glycero-beta-D-manno-heptose 1-phosphate, yielding ADP-D-glycero-beta-D-manno-heptose. In Gluconacetobacter diazotrophicus (strain ATCC 49037 / DSM 5601 / CCUG 37298 / CIP 103539 / LMG 7603 / PAl5), this protein is Bifunctional protein HldE.